Consider the following 265-residue polypeptide: Polyphosphate glucokinase (265 aa).

Residues 1–18 show a composition bias toward polar residues; sequence MTSTGPETSETPGATTQR. A disordered region spans residues 1–22; the sequence is MTSTGPETSETPGATTQRHGFG. Position 24–29 (24–29) interacts with ATP; it reads DVGGSG.

It belongs to the ROK (NagC/XylR) family. In terms of assembly, homodimer.

The enzyme catalyses [phosphate](n) + D-glucose = [phosphate](n-1) + D-glucose 6-phosphate + H(+). The catalysed reaction is D-glucose + ATP = D-glucose 6-phosphate + ADP + H(+). Functionally, catalyzes the phosphorylation of glucose using polyphosphate or ATP as the phosphoryl donor. Polyphosphate, rather than ATP, seems to be the major phosphate donor for the enzyme in M.tuberculosis. The polypeptide is Polyphosphate glucokinase (ppgK) (Mycobacterium tuberculosis (strain CDC 1551 / Oshkosh)).